Reading from the N-terminus, the 264-residue chain is Acyl-[acyl-carrier-protein]--UDP-N-acetylglucosamine O-acyltransferase (264 aa).

It belongs to the transferase hexapeptide repeat family. LpxA subfamily. As to quaternary structure, homotrimer.

The protein resides in the cytoplasm. The catalysed reaction is a (3R)-hydroxyacyl-[ACP] + UDP-N-acetyl-alpha-D-glucosamine = a UDP-3-O-[(3R)-3-hydroxyacyl]-N-acetyl-alpha-D-glucosamine + holo-[ACP]. It functions in the pathway glycolipid biosynthesis; lipid IV(A) biosynthesis; lipid IV(A) from (3R)-3-hydroxytetradecanoyl-[acyl-carrier-protein] and UDP-N-acetyl-alpha-D-glucosamine: step 1/6. Functionally, involved in the biosynthesis of lipid A, a phosphorylated glycolipid that anchors the lipopolysaccharide to the outer membrane of the cell. In Chlorobaculum parvum (strain DSM 263 / NCIMB 8327) (Chlorobium vibrioforme subsp. thiosulfatophilum), this protein is Acyl-[acyl-carrier-protein]--UDP-N-acetylglucosamine O-acyltransferase.